We begin with the raw amino-acid sequence, 239 residues long: Phosphoribosylaminoimidazole-succinocarboxamide synthase (239 aa).

Belongs to the SAICAR synthetase family.

It catalyses the reaction 5-amino-1-(5-phospho-D-ribosyl)imidazole-4-carboxylate + L-aspartate + ATP = (2S)-2-[5-amino-1-(5-phospho-beta-D-ribosyl)imidazole-4-carboxamido]succinate + ADP + phosphate + 2 H(+). It functions in the pathway purine metabolism; IMP biosynthesis via de novo pathway; 5-amino-1-(5-phospho-D-ribosyl)imidazole-4-carboxamide from 5-amino-1-(5-phospho-D-ribosyl)imidazole-4-carboxylate: step 1/2. This Bacillus mycoides (strain KBAB4) (Bacillus weihenstephanensis) protein is Phosphoribosylaminoimidazole-succinocarboxamide synthase.